We begin with the raw amino-acid sequence, 106 residues long: Isocitrate dehydrogenase [NAD] subunit gamma, mitochondrial (106 aa).

The protein belongs to the isocitrate and isopropylmalate dehydrogenases family. Heterooligomer of subunits alpha (IDH3A), beta (IDH3B), and gamma (IDH3G) in the apparent ratio of 2:1:1. The heterodimer containing one IDH3A and one IDH3B subunit and the heterodimer containing one IDH3A and one IDH3G subunit assemble into a heterotetramer (which contains two subunits of IDH3A, one of IDH3B and one of IDH3G) and further into the heterooctamer.

It localises to the mitochondrion. With respect to regulation, the heterotetramer and the heterodimer composed of IDH3A and IDH3G subunits can be allosterically activated by citrate (CIT) or/and ADP, and the two activators can act independently or synergistically. The heterodimer composed of IDH3A and IDH3B subunits cannot be allosterically regulated and the allosteric regulation of the heterotetramer is through the IDH3G subunit and not the IDH3B subunit. The IDH3G subunit contains the allosteric site which consists of a CIT-binding site and an ADP-binding site, and the binding of CIT and ADP causes conformational changes at the allosteric site which are transmitted to the active site in the catalytic subunit (IDH3A) through a cascade of conformational changes at the heterodimer interface, leading to stabilization of the isocitrate-binding at the active site and thus activation of the enzyme. ATP can activate the heterotetramer and the heterodimer composed of IDH3A and IDH3G subunits at low concentrations but inhibits their activities at high concentrations, whereas ATP exhibits only inhibitory effect on the heterodimer composed of IDH3A and IDH3B subunits. In terms of biological role, regulatory subunit which plays a role in the allosteric regulation of the enzyme catalyzing the decarboxylation of isocitrate (ICT) into alpha-ketoglutarate. The heterodimer composed of the alpha (IDH3A) and beta (IDH3B) subunits and the heterodimer composed of the alpha (IDH3A) and gamma (IDH3G) subunits, have considerable basal activity but the full activity of the heterotetramer (containing two subunits of IDH3A, one of IDH3B and one of IDH3G) requires the assembly and cooperative function of both heterodimers. This chain is Isocitrate dehydrogenase [NAD] subunit gamma, mitochondrial (IDH3G), found in Sus scrofa (Pig).